The chain runs to 178 residues: GTP-dependent dephospho-CoA kinase (178 aa).

GTP-binding residues include Asp-43, Ile-44, Val-45, Asp-62, Lys-64, and Glu-120.

The protein belongs to the GTP-dependent DPCK family.

The enzyme catalyses 3'-dephospho-CoA + GTP = GDP + CoA + H(+). It functions in the pathway cofactor biosynthesis; coenzyme A biosynthesis. Functionally, catalyzes the GTP-dependent phosphorylation of the 3'-hydroxyl group of dephosphocoenzyme A to form coenzyme A (CoA). The polypeptide is GTP-dependent dephospho-CoA kinase (Natronomonas pharaonis (strain ATCC 35678 / DSM 2160 / CIP 103997 / JCM 8858 / NBRC 14720 / NCIMB 2260 / Gabara) (Halobacterium pharaonis)).